Here is a 317-residue protein sequence, read N- to C-terminus: Probable RuBisCO transcriptional regulator (317 aa).

The 58-residue stretch at 6–63 (FTLDQLRILRAILIQGSFKKAATSLYISQPAVSSHVHNIEKQLNIQLFDRSHRNAQLT) folds into the HTH lysR-type domain. The segment at residues 23–42 (FKKAATSLYISQPAVSSHVH) is a DNA-binding region (H-T-H motif).

It belongs to the LysR transcriptional regulatory family.

Its subcellular location is the plastid. The protein localises to the chloroplast. Its function is as follows. Trans-acting transcriptional regulator of RuBisCO genes (rbcL and rbcS) expression. This Cyanidium caldarium (Red alga) protein is Probable RuBisCO transcriptional regulator (rbcR).